Here is a 231-residue protein sequence, read N- to C-terminus: Large ribosomal subunit protein uL1 (231 aa).

This sequence belongs to the universal ribosomal protein uL1 family. Part of the 50S ribosomal subunit.

Binds directly to 23S rRNA. The L1 stalk is quite mobile in the ribosome, and is involved in E site tRNA release. Functionally, protein L1 is also a translational repressor protein, it controls the translation of the L11 operon by binding to its mRNA. This Ruthia magnifica subsp. Calyptogena magnifica protein is Large ribosomal subunit protein uL1.